A 131-amino-acid chain; its full sequence is Profilin-1 (131 aa).

Belongs to the profilin family. In terms of assembly, occurs in many kinds of cells as a complex with monomeric actin in a 1:1 ratio.

It localises to the cytoplasm. The protein resides in the cytoskeleton. Functionally, binds to actin and affects the structure of the cytoskeleton. At high concentrations, profilin prevents the polymerization of actin, whereas it enhances it at low concentrations. By binding to PIP2, it inhibits the formation of IP3 and DG. The chain is Profilin-1 from Lilium longiflorum (Trumpet lily).